We begin with the raw amino-acid sequence, 500 residues long: Cysteine-rich secretory protein LCCL domain-containing 1 (500 aa).

Residues 1–23 form the signal peptide; it reads MKCTAREWLRVTTVLFMARAIPA. Residues 66 to 206 enclose the SCP domain; it reads LDLHNKLRSQ…PKAVYLVCNY (141 aa). Residues 254–280 are compositionally biased toward basic and acidic residues; sequence EETNEIERQQSQVHDTHVRTRSDDSSR. A disordered region spans residues 254-281; it reads EETNEIERQQSQVHDTHVRTRSDDSSRN. 2 LCCL domains span residues 289–384 and 390–492; these read MSQI…ANSF and TVQA…PGGK. 4 cysteine pairs are disulfide-bonded: Cys295–Cys313, Cys317–Cys337, Cys396–Cys418, and Cys422–Cys445.

Belongs to the CRISP family.

It is found in the secreted. The polypeptide is Cysteine-rich secretory protein LCCL domain-containing 1 (CRISPLD1) (Homo sapiens (Human)).